The chain runs to 128 residues: Ferric uptake regulation protein homolog (128 aa).

The protein belongs to the Fur family.

In Archaeoglobus fulgidus (strain ATCC 49558 / DSM 4304 / JCM 9628 / NBRC 100126 / VC-16), this protein is Ferric uptake regulation protein homolog.